A 477-amino-acid polypeptide reads, in one-letter code: Prolyl tri/tetrapeptidyl aminopeptidase (477 aa).

The first 27 residues, 1-27 (MRKALRSLLAASMLIGAIGAGSATAEA), serve as a signal peptide directing secretion. The propeptide occupies 28 to 33 (ASITAP). Positions 448–477 (QKDEKAAKPLAPFDAKLDRVKNDKQSALRP) are disordered. A compositionally biased stretch (basic and acidic residues) spans 462–477 (AKLDRVKNDKQSALRP).

This sequence belongs to the peptidase S37 family.

It localises to the secreted. The protein localises to the cell surface. With respect to regulation, completely inhibited by the serine protease inhibitor phenylmethylsulfonyl fluoride. Partially inhibited by the serine protease inhibitor Pefabloc. Not inhibited by cysteine proteinase-specific or metalloproteinase-specific inhibitors. Not inhibited by prolinal or its derivatives. EDTA and EGTA both partially inhibit this enzyme. EDTA has no effect on activity. Functionally, has proline-specific tripeptidyl aminopeptidase and tetrapeptidyl aminopeptidase activity. Activity is highest against tripeptides containing an Ala-Pro motif. Involved in the final processing of transglutaminase, by removing either the tetrapeptide Phe-Arg-Ala-Pro left after TAMEP or SAM-P45 hydrolysis, or the tripeptide Arg-Ala-Pro left after SGMP II hydrolysis in a single step. This is Prolyl tri/tetrapeptidyl aminopeptidase (ptp) from Streptomyces mobaraensis (Streptoverticillium mobaraense).